Consider the following 106-residue polypeptide: MSKNFEWVTPDSDLLERESTKVQPPKLYNVVLNNDDYTPMDFVIEVLERFFSHDIDKATQIMLKVHYEGKAVCGTYSAEIAETKVAQVTMYARENEHPLLCTMEQA.

The protein belongs to the ClpS family. In terms of assembly, binds to the N-terminal domain of the chaperone ClpA.

Involved in the modulation of the specificity of the ClpAP-mediated ATP-dependent protein degradation. In Vibrio parahaemolyticus serotype O3:K6 (strain RIMD 2210633), this protein is ATP-dependent Clp protease adapter protein ClpS.